The sequence spans 300 residues: Porphobilinogen deaminase (300 aa).

Cysteine 239 bears the S-(dipyrrolylmethanemethyl)cysteine mark.

This sequence belongs to the HMBS family. Monomer. It depends on dipyrromethane as a cofactor.

The enzyme catalyses 4 porphobilinogen + H2O = hydroxymethylbilane + 4 NH4(+). It functions in the pathway porphyrin-containing compound metabolism; protoporphyrin-IX biosynthesis; coproporphyrinogen-III from 5-aminolevulinate: step 2/4. Its function is as follows. Tetrapolymerization of the monopyrrole PBG into the hydroxymethylbilane pre-uroporphyrinogen in several discrete steps. The chain is Porphobilinogen deaminase from Francisella tularensis subsp. holarctica (strain OSU18).